The chain runs to 324 residues: Glyoxylate/hydroxypyruvate reductase B (324 aa).

Catalysis depends on residues Arg-237 and Glu-266. The Proton donor role is filled by His-285.

Belongs to the D-isomer specific 2-hydroxyacid dehydrogenase family. GhrB subfamily. Homodimer.

The protein localises to the cytoplasm. It carries out the reaction glycolate + NADP(+) = glyoxylate + NADPH + H(+). The catalysed reaction is (R)-glycerate + NAD(+) = 3-hydroxypyruvate + NADH + H(+). The enzyme catalyses (R)-glycerate + NADP(+) = 3-hydroxypyruvate + NADPH + H(+). Functionally, catalyzes the NADPH-dependent reduction of glyoxylate and hydroxypyruvate into glycolate and glycerate, respectively. The polypeptide is Glyoxylate/hydroxypyruvate reductase B (Escherichia coli O9:H4 (strain HS)).